A 337-amino-acid chain; its full sequence is Ketol-acid reductoisomerase (NADP(+)) (337 aa).

The KARI N-terminal Rossmann domain maps to 1-180 (MKIYYDTDVN…GGGRAGIIET (180 aa)). NADP(+)-binding positions include 24 to 27 (YGSQ), Arg47, Ser51, and 81 to 84 (DELQ). Residue His106 is part of the active site. Position 132 (Gly132) interacts with NADP(+). The region spanning 181-326 (TFKDETETDL…EKLRAMMPWL (146 aa)) is the KARI C-terminal knotted domain. Mg(2+)-binding residues include Asp189, Glu193, Glu225, and Glu229. Ser250 serves as a coordination point for substrate.

The protein belongs to the ketol-acid reductoisomerase family. Mg(2+) serves as cofactor.

It catalyses the reaction (2R)-2,3-dihydroxy-3-methylbutanoate + NADP(+) = (2S)-2-acetolactate + NADPH + H(+). The catalysed reaction is (2R,3R)-2,3-dihydroxy-3-methylpentanoate + NADP(+) = (S)-2-ethyl-2-hydroxy-3-oxobutanoate + NADPH + H(+). It functions in the pathway amino-acid biosynthesis; L-isoleucine biosynthesis; L-isoleucine from 2-oxobutanoate: step 2/4. The protein operates within amino-acid biosynthesis; L-valine biosynthesis; L-valine from pyruvate: step 2/4. Its function is as follows. Involved in the biosynthesis of branched-chain amino acids (BCAA). Catalyzes an alkyl-migration followed by a ketol-acid reduction of (S)-2-acetolactate (S2AL) to yield (R)-2,3-dihydroxy-isovalerate. In the isomerase reaction, S2AL is rearranged via a Mg-dependent methyl migration to produce 3-hydroxy-3-methyl-2-ketobutyrate (HMKB). In the reductase reaction, this 2-ketoacid undergoes a metal-dependent reduction by NADPH to yield (R)-2,3-dihydroxy-isovalerate. This chain is Ketol-acid reductoisomerase (NADP(+)), found in Thermodesulfovibrio yellowstonii (strain ATCC 51303 / DSM 11347 / YP87).